We begin with the raw amino-acid sequence, 103 residues long: RNA-binding protein YlxQ (103 aa).

It belongs to the eukaryotic ribosomal protein eL8 family.

RNA-binding protein that recognizes the K-turn motif present in ribosomal RNA, but also in box C/D and box C'/D' sRNAs. The chain is RNA-binding protein YlxQ from Enterococcus faecium (Streptococcus faecium).